Reading from the N-terminus, the 219-residue chain is MNPEFWQARWKEKRIGFNQPKVNPLLIKYFSDLKMATGSRIFIPLCGKSIDMIWLANQGFDMVGVELVESAVQEFFAENNISYTIKAHDKNSNIKCYQGQLSGQTIALWVADIFMLRTNDVGRVDAVYDRAALIAMPAELRPQYSQQVIDLSQNAHQLLLTLNYDQNERAGPPFSISHEQIQQYYSAHYQIQELEGKPSTLNAAPEMTVTENVWLLNKP.

4 residues coordinate S-adenosyl-L-methionine: W10, L45, E66, and R130.

This sequence belongs to the class I-like SAM-binding methyltransferase superfamily. TPMT family.

It localises to the cytoplasm. It catalyses the reaction S-adenosyl-L-methionine + a thiopurine = S-adenosyl-L-homocysteine + a thiopurine S-methylether.. This chain is Thiopurine S-methyltransferase, found in Psychrobacter cryohalolentis (strain ATCC BAA-1226 / DSM 17306 / VKM B-2378 / K5).